Here is a 180-residue protein sequence, read N- to C-terminus: NADH-quinone oxidoreductase subunit I (180 aa).

4Fe-4S ferredoxin-type domains lie at 48–80 (IVLTRDPDGDERCVACNLCAVACPVGCISLQKA) and 90–119 (EFFRINFSRCIFCGLCEEACPTTAIQLTPD). [4Fe-4S] cluster is bound by residues C60, C63, C66, C70, C99, C102, C105, and C109. Positions 160–180 (GKPKGSAQKEAAPIDVKSILP) are disordered.

It belongs to the complex I 23 kDa subunit family. NDH-1 is composed of 14 different subunits. Subunits NuoA, H, J, K, L, M, N constitute the membrane sector of the complex. [4Fe-4S] cluster serves as cofactor.

The protein localises to the cell inner membrane. It carries out the reaction a quinone + NADH + 5 H(+)(in) = a quinol + NAD(+) + 4 H(+)(out). Its function is as follows. NDH-1 shuttles electrons from NADH, via FMN and iron-sulfur (Fe-S) centers, to quinones in the respiratory chain. The immediate electron acceptor for the enzyme in this species is believed to be ubiquinone. Couples the redox reaction to proton translocation (for every two electrons transferred, four hydrogen ions are translocated across the cytoplasmic membrane), and thus conserves the redox energy in a proton gradient. This chain is NADH-quinone oxidoreductase subunit I, found in Tolumonas auensis (strain DSM 9187 / NBRC 110442 / TA 4).